Reading from the N-terminus, the 189-residue chain is Peptidyl-tRNA hydrolase (189 aa).

His14 serves as a coordination point for tRNA. His19 (proton acceptor) is an active-site residue. TRNA-binding residues include Tyr64, Asn66, and Asn112.

The protein belongs to the PTH family. As to quaternary structure, monomer.

It is found in the cytoplasm. The enzyme catalyses an N-acyl-L-alpha-aminoacyl-tRNA + H2O = an N-acyl-L-amino acid + a tRNA + H(+). Hydrolyzes ribosome-free peptidyl-tRNAs (with 1 or more amino acids incorporated), which drop off the ribosome during protein synthesis, or as a result of ribosome stalling. In terms of biological role, catalyzes the release of premature peptidyl moieties from peptidyl-tRNA molecules trapped in stalled 50S ribosomal subunits, and thus maintains levels of free tRNAs and 50S ribosomes. The sequence is that of Peptidyl-tRNA hydrolase from Chlorobium phaeobacteroides (strain BS1).